The following is a 148-amino-acid chain: Deoxyuridine 5'-triphosphate nucleotidohydrolase (148 aa).

Residues 67–69 (RSG), asparagine 80, 84–86 (TID), and lysine 94 contribute to the substrate site.

This sequence belongs to the dUTPase family. It depends on Mg(2+) as a cofactor.

The catalysed reaction is dUTP + H2O = dUMP + diphosphate + H(+). Its pathway is pyrimidine metabolism; dUMP biosynthesis; dUMP from dCTP (dUTP route): step 2/2. This enzyme is involved in nucleotide metabolism: it produces dUMP, the immediate precursor of thymidine nucleotides and it decreases the intracellular concentration of dUTP so that uracil cannot be incorporated into DNA. The sequence is that of Deoxyuridine 5'-triphosphate nucleotidohydrolase from Orientia tsutsugamushi (strain Ikeda) (Rickettsia tsutsugamushi).